Consider the following 130-residue polypeptide: Glycoprotein hormone alpha-2 (130 aa).

A signal peptide spans 1–22 (MPMAPRVLLFCLLGLAVTEGHG). 4 disulfides stabilise this stretch: Cys32-Cys90, Cys49-Cys104, Cys58-Cys120, and Cys62-Cys122. N-linked (GlcNAc...) asparagine glycans are attached at residues Asn38 and Asn82.

Belongs to the glycoprotein hormones subunit alpha family. As to quaternary structure, heterodimer with GPHB5; this heterodimer interacts with thyroid-stimulating hormone receptor (TSHR), and hence stimulates cAMP production.

The protein localises to the secreted. Its function is as follows. Functions as a heterodimeric glycoprotein hormone with GPHB5 able to bind and activate the thyroid-stimulating hormone receptor (TSHR), leading to increased cAMP production. Plays a central role in controlling thyroid cell metabolism. The polypeptide is Glycoprotein hormone alpha-2 (Gpha2) (Rattus norvegicus (Rat)).